A 303-amino-acid chain; its full sequence is Aspartate carbamoyltransferase catalytic subunit (303 aa).

Residues Arg-49 and Thr-50 each coordinate carbamoyl phosphate. Lys-77 contacts L-aspartate. Residues Arg-99, His-126, and Gln-129 each coordinate carbamoyl phosphate. 2 residues coordinate L-aspartate: Arg-159 and Arg-211. Carbamoyl phosphate contacts are provided by Ser-252 and Pro-253.

It belongs to the aspartate/ornithine carbamoyltransferase superfamily. ATCase family. In terms of assembly, heterododecamer (2C3:3R2) of six catalytic PyrB chains organized as two trimers (C3), and six regulatory PyrI chains organized as three dimers (R2).

The catalysed reaction is carbamoyl phosphate + L-aspartate = N-carbamoyl-L-aspartate + phosphate + H(+). It functions in the pathway pyrimidine metabolism; UMP biosynthesis via de novo pathway; (S)-dihydroorotate from bicarbonate: step 2/3. In terms of biological role, catalyzes the condensation of carbamoyl phosphate and aspartate to form carbamoyl aspartate and inorganic phosphate, the committed step in the de novo pyrimidine nucleotide biosynthesis pathway. The protein is Aspartate carbamoyltransferase catalytic subunit of Listeria monocytogenes serovar 1/2a (strain ATCC BAA-679 / EGD-e).